We begin with the raw amino-acid sequence, 176 residues long: Large ribosomal subunit protein uL10 (176 aa).

This sequence belongs to the universal ribosomal protein uL10 family. As to quaternary structure, part of the ribosomal stalk of the 50S ribosomal subunit. The N-terminus interacts with L11 and the large rRNA to form the base of the stalk. The C-terminus forms an elongated spine to which L12 dimers bind in a sequential fashion forming a multimeric L10(L12)X complex.

In terms of biological role, forms part of the ribosomal stalk, playing a central role in the interaction of the ribosome with GTP-bound translation factors. The protein is Large ribosomal subunit protein uL10 (rplJ) of Streptomyces coelicolor (strain ATCC BAA-471 / A3(2) / M145).